The sequence spans 1049 residues: Presequence protease, mitochondrial (1049 aa).

Residues 1–39 (MLRSYLHLGRHRTPAFRQPLGRLLRPTASILQYAQSRTL) constitute a mitochondrion transit peptide. H113 is a Zn(2+) binding site. The Proton acceptor role is filled by E116. Residue H117 coordinates Zn(2+). E189 is a catalytic residue. E222 is a Zn(2+) binding site.

It belongs to the peptidase M16 family. PreP subfamily. As to quaternary structure, monomer and homodimer; homodimerization is induced by binding of the substrate. The cofactor is Zn(2+).

It is found in the mitochondrion intermembrane space. The protein localises to the mitochondrion matrix. Functionally, degrades mitochondrial transit peptides after their cleavage in the intermembrane space or in the matrix, and presequence peptides; clearance of these peptides is required to keep the presequence processing machinery running. Preferentially cleaves the N-terminal side of paired basic amino acid residues. Also degrades other unstructured peptides. May function as an ATP-dependent peptidase as opposed to a metalloendopeptidase. The protein is Presequence protease, mitochondrial (cym1) of Emericella nidulans (strain FGSC A4 / ATCC 38163 / CBS 112.46 / NRRL 194 / M139) (Aspergillus nidulans).